We begin with the raw amino-acid sequence, 1093 residues long: uncharacterized protein (1093 aa).

This is an uncharacterized protein from Escherichia coli (strain K12).